We begin with the raw amino-acid sequence, 41 residues long: Photosystem I reaction center subunit IX (41 aa).

A helical membrane pass occupies residues 7-27 (YLSTAPVLATVWMIITAGILI).

It belongs to the PsaJ family.

Its subcellular location is the cellular thylakoid membrane. Functionally, may help in the organization of the PsaE and PsaF subunits. The chain is Photosystem I reaction center subunit IX from Trichodesmium erythraeum (strain IMS101).